The sequence spans 363 residues: Ribosomal RNA large subunit methyltransferase M (363 aa).

S-adenosyl-L-methionine contacts are provided by residues S190, 223-226 (CPGG), D242, D262, and D279. K308 acts as the Proton acceptor in catalysis.

Belongs to the class I-like SAM-binding methyltransferase superfamily. RNA methyltransferase RlmE family. RlmM subfamily. As to quaternary structure, monomer.

The protein localises to the cytoplasm. It carries out the reaction cytidine(2498) in 23S rRNA + S-adenosyl-L-methionine = 2'-O-methylcytidine(2498) in 23S rRNA + S-adenosyl-L-homocysteine + H(+). In terms of biological role, catalyzes the 2'-O-methylation at nucleotide C2498 in 23S rRNA. The protein is Ribosomal RNA large subunit methyltransferase M of Vibrio vulnificus (strain CMCP6).